The primary structure comprises 337 residues: HTH-type transcriptional regulator MalR (337 aa).

Residues 1–56 (MVTIKDIAQAANVSTSTVSRVISGNPRISMQTREKVKATMKSFNYQPNRAARTLAT) enclose the HTH lacI-type domain. Residues 4–23 (IKDIAQAANVSTSTVSRVIS) constitute a DNA-binding region (H-T-H motif).

Transcriptional repressor of the malA gene for maltase. This is HTH-type transcriptional regulator MalR (malR) from Staphylococcus xylosus.